The sequence spans 490 residues: GTPase Der (490 aa).

2 EngA-type G domains span residues 3–166 (PVVA…MEDL) and 203–376 (IKLA…DSST). GTP-binding positions include 9 to 16 (GRPNVGKS), 56 to 60 (DTGGI), 118 to 121 (NKTD), 209 to 216 (GRPNVGKS), 256 to 260 (DTAGV), and 321 to 324 (NKWD). The 85-residue stretch at 377–461 (RRVGTSMLTR…PIRIQFKEGE (85 aa)) folds into the KH-like domain.

It belongs to the TRAFAC class TrmE-Era-EngA-EngB-Septin-like GTPase superfamily. EngA (Der) GTPase family. In terms of assembly, associates with the 50S ribosomal subunit.

Its function is as follows. GTPase that plays an essential role in the late steps of ribosome biogenesis. This chain is GTPase Der, found in Escherichia coli O81 (strain ED1a).